The primary structure comprises 170 residues: Fluoride-specific ion channel FluC 2 (170 aa).

Transmembrane regions (helical) follow at residues 8 to 28 (ALVF…TVWI), 55 to 75 (IALL…VGMI), 84 to 104 (TFWG…AAAV), and 114 to 134 (ILIG…AAAM). Residues Gly-92 and Thr-95 each contribute to the Na(+) site.

It belongs to the fluoride channel Fluc/FEX (TC 1.A.43) family.

The protein resides in the cell membrane. It carries out the reaction fluoride(in) = fluoride(out). Na(+) is not transported, but it plays an essential structural role and its presence is essential for fluoride channel function. Fluoride-specific ion channel. Important for reducing fluoride concentration in the cell, thus reducing its toxicity. The polypeptide is Fluoride-specific ion channel FluC 2 (Corynebacterium jeikeium (strain K411)).